A 377-amino-acid chain; its full sequence is Chaperone protein DnaJ (377 aa).

The 66-residue stretch at 5–70 folds into the J domain; it reads DYYEVLGVSR…DKKAAYDQFG (66 aa). Residues 133-211 form a CR-type zinc finger; sequence GLTKELRIPT…CHGDGRVEKS (79 aa). Zn(2+)-binding residues include C146, C149, C163, C166, C185, C188, C199, and C202. CXXCXGXG motif repeat units follow at residues 146 to 153, 163 to 170, 185 to 192, and 199 to 206; these read CDLCEGSG, CGTCHGQG, CPTCHGRG, and CTKCHGDG.

The protein belongs to the DnaJ family. As to quaternary structure, homodimer. Requires Zn(2+) as cofactor.

It localises to the cytoplasm. Its function is as follows. Participates actively in the response to hyperosmotic and heat shock by preventing the aggregation of stress-denatured proteins and by disaggregating proteins, also in an autonomous, DnaK-independent fashion. Unfolded proteins bind initially to DnaJ; upon interaction with the DnaJ-bound protein, DnaK hydrolyzes its bound ATP, resulting in the formation of a stable complex. GrpE releases ADP from DnaK; ATP binding to DnaK triggers the release of the substrate protein, thus completing the reaction cycle. Several rounds of ATP-dependent interactions between DnaJ, DnaK and GrpE are required for fully efficient folding. Also involved, together with DnaK and GrpE, in the DNA replication of plasmids through activation of initiation proteins. In Shewanella baltica (strain OS223), this protein is Chaperone protein DnaJ.